A 276-amino-acid polypeptide reads, in one-letter code: ATP synthase subunit a (276 aa).

The next 6 membrane-spanning stretches (helical) occupy residues 47–67 (WHID…WLFY), 107–127 (IAPL…MDLI), 152–172 (DLNV…FYSI), 188–208 (PFNH…TLVA), 226–246 (LIFI…SVPW), and 247–267 (AIFH…LTIV).

Belongs to the ATPase A chain family. In terms of assembly, F-type ATPases have 2 components, CF(1) - the catalytic core - and CF(0) - the membrane proton channel. CF(1) has five subunits: alpha(3), beta(3), gamma(1), delta(1), epsilon(1). CF(0) has three main subunits: a(1), b(2) and c(9-12). The alpha and beta chains form an alternating ring which encloses part of the gamma chain. CF(1) is attached to CF(0) by a central stalk formed by the gamma and epsilon chains, while a peripheral stalk is formed by the delta and b chains.

It localises to the cell inner membrane. Functionally, key component of the proton channel; it plays a direct role in the translocation of protons across the membrane. The protein is ATP synthase subunit a of Shewanella pealeana (strain ATCC 700345 / ANG-SQ1).